A 221-amino-acid polypeptide reads, in one-letter code: Putative gene 53 protein (221 aa).

The polypeptide is Putative gene 53 protein (53) (Bacillus phage SP01 (Bacteriophage SP01)).